A 189-amino-acid chain; its full sequence is Interferon alpha-10 (189 aa).

The first 23 residues, 1 to 23 (MALSFSLLMAVLVLSYKSICSLG), serve as a signal peptide directing secretion. Cystine bridges form between Cys24/Cys122 and Cys52/Cys162.

This sequence belongs to the alpha/beta interferon family.

It localises to the secreted. In terms of biological role, produced by macrophages, IFN-alpha have antiviral activities. Interferon stimulates the production of two enzymes: a protein kinase and an oligoadenylate synthetase. The sequence is that of Interferon alpha-10 (IFNA10) from Homo sapiens (Human).